A 596-amino-acid chain; its full sequence is ATP-binding protein Uup (596 aa).

ABC transporter domains lie at 1 to 222 (MSLI…RIEK) and 290 to 516 (FKLD…SKIN). Residues 36–43 (GKNGAGKS) and 322–329 (GDNGCGKS) contribute to the ATP site. Residues 519 to 596 (IKIKNNFKKE…LEKNIINTKI (78 aa)) form a C-terminal domain (CTD), binds DNA region.

It belongs to the ABC transporter superfamily. ABCF family. Uup subfamily.

The protein localises to the cytoplasm. The enzyme catalyses ATP + H2O = ADP + phosphate + H(+). Functionally, probably plays a role in ribosome assembly or function. May be involved in resolution of branched DNA intermediates that result from template switching in postreplication gaps. Binds DNA and has ATPase activity. The protein is ATP-binding protein Uup of Buchnera aphidicola subsp. Acyrthosiphon pisum (strain APS) (Acyrthosiphon pisum symbiotic bacterium).